Here is a 1050-residue protein sequence, read N- to C-terminus: ATP-dependent DNA helicase MPH1 (1050 aa).

Residues 95–262 enclose the Helicase ATP-binding domain; the sequence is IVQRAFYHNL…EIIDNLNISK (168 aa). 108 to 115 contributes to the ATP binding site; sequence LPTGLGKT. Positions 210–213 match the DEAH box motif; the sequence is DEAH. A Helicase C-terminal domain is found at 431–631; sequence KIEAMMEELD…LIDLKEQNRM (201 aa). Disordered regions lie at residues 493–524 and 743–821; these read DESNFGKKSKGKRVGKKQQDDSKSSSENAQIN and DSDE…PPKR. The segment covering 499–508 has biased composition (basic residues); it reads KKSKGKRVGK. The segment covering 786–799 has biased composition (basic and acidic residues); the sequence is RTLDQHHSASEERG. Residues 800–810 are compositionally biased toward polar residues; that stretch reads INSNFSHESNL.

The protein belongs to the DEAD box helicase family. DEAH subfamily. FANCM sub-subfamily. As to quaternary structure, interacts with the MHF histone-fold complex to form the FANCM-MHF complex.

Its subcellular location is the nucleus. It catalyses the reaction ATP + H2O = ADP + phosphate + H(+). Functionally, ATP-dependent DNA helicase involved in DNA damage repair by homologous recombination and in genome maintenance. Capable of unwinding D-loops. Plays a role in limiting crossover recombinants during mitotic DNA double-strand break (DSB) repair. Component of a FANCM-MHF complex which promotes gene conversion at blocked replication forks, probably by reversal of the stalled fork. The polypeptide is ATP-dependent DNA helicase MPH1 (Scheffersomyces stipitis (strain ATCC 58785 / CBS 6054 / NBRC 10063 / NRRL Y-11545) (Yeast)).